The primary structure comprises 988 residues: MDIRCVNWFENKGETKYIYLKAINRESNVIFIRFNYYYHYVYDASKELEYKPNECIDLGPFKIINIDEKLSTDIRYVEPRNYYTSELVLVKDLKRNREKQYLQEYLDITWFYLLNNITPDGCYKIDIEHLTPIKKDCYHCDDVSKVFIQEIPIFEVKFTYLLFDIECQFDKKFPSVFVNPISHISCWIIDKVTEYKFTLINTDILPDKEPSILHHKDFSPKDRITYCTEIVMLLIMKKILEHRFDFVITFNGNNFDIRYISGRLEILEKSFIYFSLPDATETVKLKIFERFVTGGTFTNKTYHINNNNGVMFFDLYAFIQKTERLDSYKLDSISKNIFNCNVAIKEIDDTILTLEATVKDNSKDKLSIFSRVLETGNYITIGDNNVSKIVYKDINQDSFIIKVISNRDYEIGSVHNISFGKDDVDLKDMYKNYNLEIALDMERYCIHDACLCKYIWDYYRVPSKINAASSTYLLPQSLALEYRASTLIKGPLLKLLLEERVIYTRKITKVRYPYIGGKVFLPSQKTFENNVMIFDYNSLYPNVCIYGNLSPEKLVCILLNSNKLESEINMRTIKSKYPYPEYVCVSCESRLSDYYSEIIVYDRREKGIIPKLLEMFIGKRKEYKNLLKTASTTIESTLYDSLQYIYKIIANSVYGLMGFSNSTLYSYSSAKTCTTIGRNMITYLDSIMNGAVWENDKLILADFPRNIFSGETMFNKELEVPNMNESFKFRSVYGDTDSIFSEISTKDIEKTAKIAKHLEHIINTKILHANFKIEFEAIYTQLILQSKKKYTTIKYLANYKPGDKPIRVNKGTSETRRDVALFHKHMIQRYKDMLMKLLMESKGQQEITRLILQSLETDMISEFTHNREFEKYLLSRKHHNNYKSATHSNFELVKRYNLENTEKIEIGERYYYIYICDISLPWQKKLCNILSYEVIADSKFYLPKDKRIFYEIYFKRIASEVVNLLTDKTQCMLFFSRLFGTKPVFSSD.

The protein belongs to the DNA polymerase type-B family. Interacts with A20. Component of the Uracil-DNA glycosylase(UDG)-A20-polymerase complex; A20 and UDG form a heterodimeric processivity factor that associates with E9 to form the processive polymerase holoenzyme.

It catalyses the reaction DNA(n) + a 2'-deoxyribonucleoside 5'-triphosphate = DNA(n+1) + diphosphate. Functionally, catalyzes DNA synthesis. Acquires processivity by associating with a heterodimeric processivity factor comprised of the viral A20 and D4 proteins, thereby forming the DNA polymerase holoenzyme. Displays 3'- to 5' exonuclease activity. Might participate in viral DNA recombination. Does not perform translesion synthesis across an abasic site. The sequence is that of DNA polymerase (POL) from Vertebrata (FPV).